A 229-amino-acid chain; its full sequence is Serine acetyltransferase (229 aa).

This sequence belongs to the transferase hexapeptide repeat family.

It localises to the cytoplasm. The catalysed reaction is L-serine + acetyl-CoA = O-acetyl-L-serine + CoA. It participates in amino-acid biosynthesis; L-cysteine biosynthesis; L-cysteine from L-serine: step 1/2. In terms of biological role, catalyzes the acetylation of serine by acetyl-CoA to produce O-acetylserine (OAS). The chain is Serine acetyltransferase (cysE) from Mycobacterium tuberculosis (strain ATCC 25618 / H37Rv).